The chain runs to 317 residues: 4-hydroxy-3-methylbut-2-enyl diphosphate reductase (317 aa).

Residue Cys-12 coordinates [4Fe-4S] cluster. Residues His-41 and His-74 each contribute to the (2E)-4-hydroxy-3-methylbut-2-enyl diphosphate site. His-41 and His-74 together coordinate dimethylallyl diphosphate. Isopentenyl diphosphate contacts are provided by His-41 and His-74. A [4Fe-4S] cluster-binding site is contributed by Cys-96. Residue His-124 coordinates (2E)-4-hydroxy-3-methylbut-2-enyl diphosphate. Dimethylallyl diphosphate is bound at residue His-124. Isopentenyl diphosphate is bound at residue His-124. The active-site Proton donor is the Glu-126. Thr-168 provides a ligand contact to (2E)-4-hydroxy-3-methylbut-2-enyl diphosphate. Cys-198 provides a ligand contact to [4Fe-4S] cluster. (2E)-4-hydroxy-3-methylbut-2-enyl diphosphate contacts are provided by Ser-226, Ser-227, Asn-228, and Ser-270. The dimethylallyl diphosphate site is built by Ser-226, Ser-227, Asn-228, and Ser-270. Residues Ser-226, Ser-227, Asn-228, and Ser-270 each coordinate isopentenyl diphosphate.

Belongs to the IspH family. [4Fe-4S] cluster is required as a cofactor.

It catalyses the reaction isopentenyl diphosphate + 2 oxidized [2Fe-2S]-[ferredoxin] + H2O = (2E)-4-hydroxy-3-methylbut-2-enyl diphosphate + 2 reduced [2Fe-2S]-[ferredoxin] + 2 H(+). The enzyme catalyses dimethylallyl diphosphate + 2 oxidized [2Fe-2S]-[ferredoxin] + H2O = (2E)-4-hydroxy-3-methylbut-2-enyl diphosphate + 2 reduced [2Fe-2S]-[ferredoxin] + 2 H(+). Its pathway is isoprenoid biosynthesis; dimethylallyl diphosphate biosynthesis; dimethylallyl diphosphate from (2E)-4-hydroxy-3-methylbutenyl diphosphate: step 1/1. It participates in isoprenoid biosynthesis; isopentenyl diphosphate biosynthesis via DXP pathway; isopentenyl diphosphate from 1-deoxy-D-xylulose 5-phosphate: step 6/6. Catalyzes the conversion of 1-hydroxy-2-methyl-2-(E)-butenyl 4-diphosphate (HMBPP) into a mixture of isopentenyl diphosphate (IPP) and dimethylallyl diphosphate (DMAPP). Acts in the terminal step of the DOXP/MEP pathway for isoprenoid precursor biosynthesis. In Chromohalobacter salexigens (strain ATCC BAA-138 / DSM 3043 / CIP 106854 / NCIMB 13768 / 1H11), this protein is 4-hydroxy-3-methylbut-2-enyl diphosphate reductase.